We begin with the raw amino-acid sequence, 443 residues long: Xaa-Pro dipeptidase (443 aa).

Mn(2+)-binding residues include Asp246, Asp257, His339, Glu384, and Glu423.

This sequence belongs to the peptidase M24B family. Bacterial-type prolidase subfamily. Mn(2+) serves as cofactor.

The enzyme catalyses Xaa-L-Pro dipeptide + H2O = an L-alpha-amino acid + L-proline. In terms of biological role, splits dipeptides with a prolyl residue in the C-terminal position. This chain is Xaa-Pro dipeptidase, found in Shigella flexneri.